We begin with the raw amino-acid sequence, 422 residues long: Zinc finger protein 550 (422 aa).

The 72-residue stretch at 12–83 (VTFKDVAVTF…KRGLSHATCA (72 aa)) folds into the KRAB domain. A disordered region spans residues 113 to 158 (LESSTSSDSRLGRARDEEGLLEMQKGKVTPETDLHKETHLGKVSLE). The span at 122–152 (RLGRARDEEGLLEMQKGKVTPETDLHKETHL) shows a compositional bias: basic and acidic residues. 8 consecutive C2H2-type zinc fingers follow at residues 203-225 (YKCK…QRVH), 231-253 (YECN…YLIH), 259-281 (YKCL…HPIH), 287-309 (YECS…NRTH), 315-337 (FECK…YIIH), 343-365 (YDCM…QRIH), 371-393 (YECT…SVIH), and 399-421 (YKCI…QRVH).

The protein belongs to the krueppel C2H2-type zinc-finger protein family.

It localises to the nucleus. Its function is as follows. May be involved in transcriptional regulation. This chain is Zinc finger protein 550 (ZNF550), found in Homo sapiens (Human).